Consider the following 311-residue polypeptide: HPr kinase/phosphorylase (311 aa).

Active-site residues include H138 and K159. 153–160 provides a ligand contact to ATP; it reads GKSGVGKS. Mg(2+) is bound at residue S160. Residue D177 is the Proton acceptor; for phosphorylation activity. Proton donor; for dephosphorylation activity of the active site. The important for the catalytic mechanism of both phosphorylation and dephosphorylation stretch occupies residues 201–210; that stretch reads LEIRGLGIIN. E202 contributes to the Mg(2+) binding site. R243 is a catalytic residue. Residues 264–269 form an important for the catalytic mechanism of dephosphorylation region; the sequence is PVRPGR.

Belongs to the HPrK/P family. As to quaternary structure, homohexamer. Requires Mg(2+) as cofactor.

The enzyme catalyses [HPr protein]-L-serine + ATP = [HPr protein]-O-phospho-L-serine + ADP + H(+). It carries out the reaction [HPr protein]-O-phospho-L-serine + phosphate + H(+) = [HPr protein]-L-serine + diphosphate. Functionally, catalyzes the ATP- as well as the pyrophosphate-dependent phosphorylation of a specific serine residue in HPr, a phosphocarrier protein of the phosphoenolpyruvate-dependent sugar phosphotransferase system (PTS). HprK/P also catalyzes the pyrophosphate-producing, inorganic phosphate-dependent dephosphorylation (phosphorolysis) of seryl-phosphorylated HPr (P-Ser-HPr). The two antagonistic activities of HprK/P are regulated by several intracellular metabolites, which change their concentration in response to the absence or presence of rapidly metabolisable carbon sources (glucose, fructose, etc.) in the growth medium. Also phosphorylates/dephosphorylates the HPr-like catabolite repression protein crh on a specific serine residue. Therefore, by controlling the phosphorylation state of HPr and crh, HPrK/P is a sensor enzyme that plays a major role in the regulation of carbon metabolism and sugar transport: it mediates carbon catabolite repression (CCR), and regulates PTS-catalyzed carbohydrate uptake and inducer exclusion. In Geobacillus sp. (strain WCH70), this protein is HPr kinase/phosphorylase.